A 505-amino-acid polypeptide reads, in one-letter code: Glycerol kinase 2 (505 aa).

Thr-17 contributes to the ADP binding site. Residues Thr-17, Thr-18, and Ser-19 each contribute to the ATP site. Residue Thr-17 coordinates sn-glycerol 3-phosphate. ADP is bound at residue Arg-21. Positions 87, 88, 139, and 249 each coordinate sn-glycerol 3-phosphate. Glycerol contacts are provided by Arg-87, Glu-88, Tyr-139, Asp-249, and Gln-250. ADP is bound by residues Thr-271 and Gly-314. 4 residues coordinate ATP: Thr-271, Gly-314, Gln-318, and Gly-415. ADP-binding residues include Gly-415 and Asn-419.

It belongs to the FGGY kinase family.

The catalysed reaction is glycerol + ATP = sn-glycerol 3-phosphate + ADP + H(+). Its pathway is polyol metabolism; glycerol degradation via glycerol kinase pathway; sn-glycerol 3-phosphate from glycerol: step 1/1. With respect to regulation, inhibited by fructose 1,6-bisphosphate (FBP). Key enzyme in the regulation of glycerol uptake and metabolism. Catalyzes the phosphorylation of glycerol to yield sn-glycerol 3-phosphate. This is Glycerol kinase 2 from Pseudomonas aeruginosa (strain ATCC 15692 / DSM 22644 / CIP 104116 / JCM 14847 / LMG 12228 / 1C / PRS 101 / PAO1).